Consider the following 154-residue polypeptide: 6,7-dimethyl-8-ribityllumazine synthase (154 aa).

Residues F22, 56–58 (AFE), and 80–82 (TVI) contribute to the 5-amino-6-(D-ribitylamino)uracil site. Position 85-86 (85-86 (AT)) interacts with (2S)-2-hydroxy-3-oxobutyl phosphate. Catalysis depends on H88, which acts as the Proton donor. Residue F113 coordinates 5-amino-6-(D-ribitylamino)uracil. R127 lines the (2S)-2-hydroxy-3-oxobutyl phosphate pocket.

It belongs to the DMRL synthase family. In terms of assembly, forms an icosahedral capsid composed of 60 subunits, arranged as a dodecamer of pentamers.

It catalyses the reaction (2S)-2-hydroxy-3-oxobutyl phosphate + 5-amino-6-(D-ribitylamino)uracil = 6,7-dimethyl-8-(1-D-ribityl)lumazine + phosphate + 2 H2O + H(+). The protein operates within cofactor biosynthesis; riboflavin biosynthesis; riboflavin from 2-hydroxy-3-oxobutyl phosphate and 5-amino-6-(D-ribitylamino)uracil: step 1/2. Its function is as follows. Catalyzes the formation of 6,7-dimethyl-8-ribityllumazine by condensation of 5-amino-6-(D-ribitylamino)uracil with 3,4-dihydroxy-2-butanone 4-phosphate. This is the penultimate step in the biosynthesis of riboflavin. This chain is 6,7-dimethyl-8-ribityllumazine synthase, found in Bacillus licheniformis (strain ATCC 14580 / DSM 13 / JCM 2505 / CCUG 7422 / NBRC 12200 / NCIMB 9375 / NCTC 10341 / NRRL NRS-1264 / Gibson 46).